The sequence spans 535 residues: Peroxisomal membrane protein PEX29 (535 aa).

The next 2 membrane-spanning stretches (helical) occupy residues 139-159 (LSVP…SKPL) and 176-196 (ILLL…PAYM). A glycan (N-linked (GlcNAc...) asparagine) is linked at Asn-239. A helical transmembrane segment spans residues 247 to 267 (MLLYVMSYDFVTSLIVKYLYF). The N-linked (GlcNAc...) asparagine glycan is linked to Asn-271. A run of 2 helical transmembrane segments spans residues 272–292 (ITIF…LFGA) and 297–317 (AMLP…TIAM). N-linked (GlcNAc...) asparagine glycosylation is found at Asn-450 and Asn-515. Positions 511–535 (AHRRNKSMESSNSLHPVKSIDSVDG) are disordered.

It belongs to the PEX28-32 family. PEX29 subfamily.

The protein resides in the endoplasmic reticulum membrane. With PEX23, contributes to the formation of endoplasmic reticulum-mitochondria junctions which are important for mitochondrial function. Involved in lipid dropplets formation. This Ogataea parapolymorpha (strain ATCC 26012 / BCRC 20466 / JCM 22074 / NRRL Y-7560 / DL-1) (Yeast) protein is Peroxisomal membrane protein PEX29.